Reading from the N-terminus, the 1237-residue chain is MGGALGPALLLTSLLGAWARLGAGQGEQAVTVAVVFGSSGPLQTQARTRLTSQNFLDLPLEIQPLTVGVNNTNPSSILTQICGLLGAARVHGIVFEDNVDTEAVAQLLDFVSSQTHVPILSISGGSAVVLTPKEPGSAFLQLGVSLEQQLQVLFKVLEEYDWSAFAVITSLHPGHALFLEGVRAVADASYLSWRLLDVLTLELGPGGPRARTQRLLRQVDAPVLVAYCSREEAEVLFAEAAQAGLVGPGHVWLVPNLALGSTDAPPAAFPVGLISVVTESWRLSLRQKVRDGVAILALGAHSYRRQYGTLPAPAGDCRSHPGPVSPAREAFYRHLLNVTWEGRDFSFSPGGYLVRPTMVVIALNRHRLWEMVGRWDHGVLYMKYPVWPRYSTSLQPVVDSRHLTVATLEERPFVIVESPDPGTGGCVPNTVPCRRQSNHTFSSGDLTPYTKLCCKGFCIDILKKLAKVVKFSYDLYLVTNGKHGKRVRGVWNGMIGEVYYKRADMAIGSLTINEERSEIIDFSVPFVETGISVMVSRSNGTVSPSAFLEPYSPAVWVMMFVMCLTVVAITVFMFEYFSPVSYNQNLTKGKKPGGPSFTIGKSVWLLWALVFNNSVPIENPRGTTSKIMVLVWAFFAVIFLASYTANLAAFMIQEQYIDTVSGLSDKKFQRPQDQYPPFRFGTVPNGSTERNIRSNYRDMHTHMVKFNQRSVEDALTSLKMGKLDAFIYDAAVLNYMAGKDEGCKLVTIGSGKVFATTGYGIAMQKDSHWKRAIDLALLQLLGDGETQKLETVWLSGICQNEKNEVMSSKLDIDNMAGVFYMLLVAMGLALLVFAWEHLVYWKLRHSVPNSSQLDFLLAFSRGIYSCFNGVQSLPSPARPPSPDLTADSAQANVLKMLQAARDMVNTADVSSSLDRATRTIENWGNNRRVPAPTASGPRSSTPGPPGQPSPSGWGPPGGGRTPLARRAPQPPARPATCGPPLPDVSRPSCRHASDARWPVRVGHQGPHVSASERRALPERSLLPAHCHYSSFPRAERSGRPYLPLFPEPPEPDDLPLLGPEQLARREAMLRAAWARGPRPRHASLPSSVAEAFTRSNPLPARCTGHACACPCPQSRPSCRHLAQAQSLRLPSYPEACVEGVPAGVATWQPRQHVCLHAHTRLPFCWGTVCRHPPPCTSHSPWLIGTWEPPAHRVRTLGLGTGYRDSGVLEEVSREACGTQGFPRSCTWRRVSSLESEV.

Positions 1–19 are cleaved as a signal peptide; that stretch reads MGGALGPALLLTSLLGAWA. Residues 20-554 are Extracellular-facing; the sequence is RLGAGQGEQA…SAFLEPYSPA (535 aa). Residues asparagine 70 and asparagine 73 are each glycosylated (N-linked (GlcNAc...) asparagine). Cysteine 82 and cysteine 317 are disulfide-bonded. N-linked (GlcNAc...) asparagine glycosylation is found at asparagine 337 and asparagine 438. 2 disulfides stabilise this stretch: cysteine 426–cysteine 453 and cysteine 433–cysteine 454. Residues serine 509, threonine 511, and arginine 516 each contribute to the L-glutamate site. Residue asparagine 539 is glycosylated (N-linked (GlcNAc...) asparagine). The helical transmembrane segment at 555-575 threads the bilayer; that stretch reads VWVMMFVMCLTVVAITVFMFE. The Cytoplasmic portion of the chain corresponds to 576 to 601; the sequence is YFSPVSYNQNLTKGKKPGGPSFTIGK. The tract at residues 601-620 is pore-forming; the sequence is KSVWLLWALVFNNSVPIENP. The discontinuously helical intramembrane region spans 602–611; sequence SVWLLWALVF. At 612–622 the chain is on the cytoplasmic side; it reads NNSVPIENPRG. The helical transmembrane segment at 623 to 644 threads the bilayer; sequence TTSKIMVLVWAFFAVIFLASYT. Over 645–813 the chain is Extracellular; sequence ANLAAFMIQE…EVMSSKLDID (169 aa). Asparagine 685 carries an N-linked (GlcNAc...) asparagine glycan. Serine 687, threonine 688, and aspartate 729 together coordinate L-glutamate. Cysteine 743 and cysteine 798 are disulfide-bonded. The chain crosses the membrane as a helical span at residues 814-833; the sequence is NMAGVFYMLLVAMGLALLVF. The Cytoplasmic portion of the chain corresponds to 834 to 1237; the sequence is AWEHLVYWKL…RRVSSLESEV (404 aa). Residues serine 875, serine 881, and serine 912 each carry the phosphoserine modification. Positions 907–925 are enriched in polar residues; that stretch reads ADVSSSLDRATRTIENWGN. Residues 907–990 are disordered; the sequence is ADVSSSLDRA…LPDVSRPSCR (84 aa). Over residues 930–941 the composition is skewed to low complexity; the sequence is PAPTASGPRSST. Residues 968–982 show a composition bias toward pro residues; that stretch reads PQPPARPATCGPPLP. Positions 1235–1237 match the PDZ-binding motif; that stretch reads SEV.

The protein belongs to the glutamate-gated ion channel (TC 1.A.10.1) family. NR2C/GRIN2C subfamily. As to quaternary structure, heterotetramer. Forms heterotetrameric channels composed of two GluN1/zeta subunits (GRIN1), and two identical GluN2/epsilon subunits (GRIN2A, GRIN2B, GRIN2C or GRIN2D) or GluN3 subunits (GRIN3A or GRIN3B) (in vitro). In vivo, the subunit composition may depend on the expression levels of the different subunits. Interacts with PDZ domains of PATJ and DLG4. Interacts (via PDZ-binding motif) with SNX27 (via PDZ domain); the interaction is required for recycling to the plasma membrane when endocytosed and prevent degradation in lysosomes. Detected in cerebellum.

It is found in the cell membrane. The protein resides in the postsynaptic cell membrane. It catalyses the reaction Ca(2+)(in) = Ca(2+)(out). It carries out the reaction Na(+)(in) = Na(+)(out). The catalysed reaction is K(+)(in) = K(+)(out). Functionally, component of N-methyl-D-aspartate (NMDA) receptors (NMDARs) that function as heterotetrameric, ligand-gated cation channels with high calcium permeability and voltage-dependent block by Mg(2+). Participates in synaptic plasticity for learning and memory formation by contributing to the slow phase of excitatory postsynaptic current and long-term synaptic potentiation. Channel activation requires binding of the neurotransmitter L-glutamate to the GluN2 subunit, glycine or D-serine binding to the GluN1 subunit, plus membrane depolarization to eliminate channel inhibition by Mg(2+). NMDARs mediate simultaneously the potasium efflux and the influx of calcium and sodium. Each GluN2 subunit confers differential attributes to channel properties, including activation, deactivation and desensitization kinetics, pH sensitivity, Ca2(+) permeability, and binding to allosteric modulators. This is Glutamate receptor ionotropic, NMDA 2C from Rattus norvegicus (Rat).